A 727-amino-acid polypeptide reads, in one-letter code: Synaptic vesicle glycoprotein 2C (727 aa).

The segment at 1 to 57 is interaction with SYT1; it reads MEDSYKDRTSLMKGAKDIAREVKKQTVKKVNQAVDRAQDEYTQRSYSRFQDEEDDDD. Residues 1-154 are Cytoplasmic-facing; it reads MEDSYKDRTS…CGHGRFQWAL (154 aa). Disordered stretches follow at residues 24–84 and 109–128; these read KQTV…GHDE and VGQPKGDEYKDRRELESERR. Phosphoserine is present on residues Ser75 and Ser76. Thr79 carries the post-translational modification Phosphothreonine. Residues 113–128 show a composition bias toward basic and acidic residues; that stretch reads KGDEYKDRRELESERR. The helical transmembrane segment at 155 to 175 threads the bilayer; sequence FFVLGMALMADGVEVFVVGFV. The Extracellular portion of the chain corresponds to 176–191; it reads LPSAETDLCIPNSGSG. A helical transmembrane segment spans residues 192–212; it reads WLGSIVYLGMMVGAFFWGGLA. Over 213 to 226 the chain is Cytoplasmic; the sequence is DKVGRKQSLLICMS. Residues 227-247 form a helical membrane-spanning segment; sequence VNGFFAFLSSFVQGYGFFLFC. Arg248 is a topological domain (extracellular). A helical transmembrane segment spans residues 249–269; it reads LLSGFGIGGAIPTVFSYFAEV. The Cytoplasmic portion of the chain corresponds to 270–280; that stretch reads LAREKRGEHLS. A helical transmembrane segment spans residues 281 to 301; that stretch reads WLCMFWMIGGIYASAMAWAII. At 302–320 the chain is on the extracellular side; that stretch reads PHYGWSFSMGSAYQFHSWR. The helical transmembrane segment at 321-341 threads the bilayer; that stretch reads VFVIVCALPCVSSVVALTFMP. Topologically, residues 342 to 437 are cytoplasmic; the sequence is ESPRFLLEVG…PVRDNTIKLT (96 aa). The chain crosses the membrane as a helical span at residues 438–458; the sequence is IVWFTLSFGYYGLSVWFPDVI. Residues 459-578 lie on the Extracellular side of the membrane; the sequence is KPLQSDEYAL…CQITFDDDYS (120 aa). Phosphotyrosine is present on Tyr466. N-linked (GlcNAc...) asparagine glycosylation is found at Asn480, Asn484, Asn534, Asn559, and Asn565. A (Microbial infection) C.botulinum neurotoxin type A-binding region spans residues 519–563; the sequence is SCTFEDVTSVNTYFKNCTFIDTVFDNTDFEPYKFIDSEFKNCSFF. The chain crosses the membrane as a helical span at residues 579–599; that stretch reads AYWIYFVNFLGTLAVLPGNIV. Residues 600–609 are Cytoplasmic-facing; the sequence is SALLMDRIGR. A helical membrane pass occupies residues 610–630; it reads LTMLGGSMVLSGISCFFLWFG. The Extracellular portion of the chain corresponds to 631–636; sequence TSESMM. The helical transmembrane segment at 637 to 657 threads the bilayer; that stretch reads IGMLCLYNGLTISAWNSLDVV. Over 658–669 the chain is Cytoplasmic; it reads TVELYPTDRRAT. The helical transmembrane segment at 670 to 690 threads the bilayer; the sequence is GFGFLNALCKAAAVLGNLIFG. Residues 691 to 698 are Extracellular-facing; sequence SLVSITKS. Residues 699 to 719 form a helical membrane-spanning segment; the sequence is IPILLASTVLVCGGLVGLCLP. The Cytoplasmic portion of the chain corresponds to 720–727; the sequence is DTRTQVLM.

The protein belongs to the major facilitator superfamily. Interacts with SYT1 in a calcium-dependent manner. As to quaternary structure, (Microbial infection) Interacts with C.botulinum neurotoxin type A1 and type A2 (BoNT/A, botA). Interaction is improved by glycosylation of SV2. In terms of processing, N-glycosylated. Upon expression in a kidney cell line the most abundant glycan on Asn-534 is GlcNAc(3)Hex(5), while on Asn-559 and Asn-565 the most abundant glycan is GlcNAc2Fuc1Man3GlcNAc3Gal3. Both Asn-559 and Asn-565 have a high degree of glycan heterogeneity.

It localises to the cytoplasmic vesicle. Its subcellular location is the secretory vesicle. It is found in the synaptic vesicle membrane. Its function is as follows. Plays a role in the control of regulated secretion in neural and endocrine cells, enhancing selectively low-frequency neurotransmission. Positively regulates vesicle fusion by maintaining the readily releasable pool of secretory vesicles. Functionally, (Microbial infection) Receptor for C.botulinum neurotoxin type A (BoNT/A, botA); the toxin probably binds via extracellular loop 4. Recognition by BoNT/A relies on both protein-protein and protein-N-glycosylation; glycosylation of Asn-559 increases its affinity for BoNT/A. Also serves as a receptor for the closely related C.botulinum neurotoxin type A2; glycosylation is not essential but enhances the interaction. (Microbial infection) Possible receptor for C.botulinum neurotoxin type D (BoNT/D, botD); note that type D does not usually infect humans. The protein is Synaptic vesicle glycoprotein 2C (SV2C) of Homo sapiens (Human).